The sequence spans 163 residues: UPF0478 protein SAB1599c (163 aa).

A helical transmembrane segment spans residues 7–27 (IAGIIAAIAFLILCIGIVAVL).

This sequence belongs to the UPF0478 family.

It is found in the cell membrane. The polypeptide is UPF0478 protein SAB1599c (Staphylococcus aureus (strain bovine RF122 / ET3-1)).